A 97-amino-acid chain; its full sequence is MKIRPLHDRVIIKRKEAESKSAGGIVLTGSAAGKSTRGKVLAVGNGRILDNGETKPLDVKIGDIVIFNDGYGVKVEKIDNDEVLIMSESDILAIVEK.

The protein belongs to the GroES chaperonin family. As to quaternary structure, heptamer of 7 subunits arranged in a ring. Interacts with the chaperonin GroEL.

The protein resides in the cytoplasm. In terms of biological role, together with the chaperonin GroEL, plays an essential role in assisting protein folding. The GroEL-GroES system forms a nano-cage that allows encapsulation of the non-native substrate proteins and provides a physical environment optimized to promote and accelerate protein folding. GroES binds to the apical surface of the GroEL ring, thereby capping the opening of the GroEL channel. In Wigglesworthia glossinidia brevipalpis, this protein is Co-chaperonin GroES.